Here is a 57-residue protein sequence, read N- to C-terminus: UPF0391 membrane protein Xaut_1725 (57 aa).

Transmembrane regions (helical) follow at residues 4–24 (WAVTFLVVALIAAVLGFGGIA) and 30–50 (IAKIIFFVAIVLFVISAVAGL).

This sequence belongs to the UPF0391 family.

The protein resides in the cell membrane. In Xanthobacter autotrophicus (strain ATCC BAA-1158 / Py2), this protein is UPF0391 membrane protein Xaut_1725.